We begin with the raw amino-acid sequence, 509 residues long: tRNA-2-methylthio-N(6)-dimethylallyladenosine synthase (509 aa).

Over residues 1–15 (MNEQQRLASQQANSS) the composition is skewed to polar residues. The disordered stretch occupies residues 1–25 (MNEQQRLASQQANSSTKKEEKDYSK). The span at 16 to 25 (TKKEEKDYSK) shows a compositional bias: basic and acidic residues. One can recognise an MTTase N-terminal domain in the interval 66-184 (RKFYIRTYGC…LPYILKDAMF (119 aa)). The [4Fe-4S] cluster site is built by cysteine 75, cysteine 111, cysteine 145, cysteine 221, cysteine 225, and cysteine 228. The Radical SAM core domain occupies 207–437 (RRGDIKAWVN…NTLVNTLAIE (231 aa)). Residues 440–503 (SRYKGQIVEV…TWSLNGELVE (64 aa)) form the TRAM domain.

It belongs to the methylthiotransferase family. MiaB subfamily. Monomer. The cofactor is [4Fe-4S] cluster.

It localises to the cytoplasm. It carries out the reaction N(6)-dimethylallyladenosine(37) in tRNA + (sulfur carrier)-SH + AH2 + 2 S-adenosyl-L-methionine = 2-methylsulfanyl-N(6)-dimethylallyladenosine(37) in tRNA + (sulfur carrier)-H + 5'-deoxyadenosine + L-methionine + A + S-adenosyl-L-homocysteine + 2 H(+). Its function is as follows. Catalyzes the methylthiolation of N6-(dimethylallyl)adenosine (i(6)A), leading to the formation of 2-methylthio-N6-(dimethylallyl)adenosine (ms(2)i(6)A) at position 37 in tRNAs that read codons beginning with uridine. The chain is tRNA-2-methylthio-N(6)-dimethylallyladenosine synthase from Bacillus cereus (strain B4264).